A 388-amino-acid chain; its full sequence is Probable fatty acid desaturase DES1 (388 aa).

The segment at 1 to 33 (MATTPMTVVDHEAEEAVAKAREDDKSRQVDAFD) is disordered. The segment covering 9-30 (VDHEAEEAVAKAREDDKSRQVD) has biased composition (basic and acidic residues). 2 helical membrane-spanning segments follow: residues 62-82 (LWYV…AAAM) and 85-105 (WAVW…FFVL). Positions 107–111 (HDCGH) match the Histidine box-1 motif. The helical transmembrane segment at 119 to 139 (TLNSVVGHLLHSFILIPYHGW) threads the bilayer. Positions 143 to 147 (HRTHH) match the Histidine box-2 motif. 3 helical membrane passes run 177 to 194 (IRFT…YLFY), 226 to 246 (WCIM…LQVL), and 248 to 268 (MYGL…YLHH). The Histidine box-3 motif lies at 310-314 (HVIHH).

This sequence belongs to the fatty acid desaturase type 1 family. Highly expressed in root hair cells. Barely detected in panicle, shoot apex, stems and leaves.

The protein localises to the membrane. It participates in lipid metabolism; polyunsaturated fatty acid biosynthesis. The sequence is that of Probable fatty acid desaturase DES1 from Sorghum bicolor (Sorghum).